Reading from the N-terminus, the 130-residue chain is Small ribosomal subunit protein uS8 (130 aa).

This sequence belongs to the universal ribosomal protein uS8 family. Part of the 30S ribosomal subunit. Contacts proteins S5 and S12.

Functionally, one of the primary rRNA binding proteins, it binds directly to 16S rRNA central domain where it helps coordinate assembly of the platform of the 30S subunit. This Yersinia pseudotuberculosis serotype O:1b (strain IP 31758) protein is Small ribosomal subunit protein uS8.